The following is a 91-amino-acid chain: Small ubiquitin-related modifier (91 aa).

The 79-residue stretch at 13–91 (EYIKIKVVGQ…EVYQEQLGGF (79 aa)) folds into the Ubiquitin-like domain. A Glycyl lysine isopeptide (Gly-Lys) (interchain with K-? in acceptor proteins) cross-link involves residue G90. A propeptide is located at residue F91.

It belongs to the ubiquitin family. SUMO subfamily. As to quaternary structure, covalently attached to tbx-2. Covalently attached to lin-1. Covalently attached to lin-11. Covalently attached to sop-2. Covalently attached to bet-1. Cleavage of precursor form by ulp-1 is necessary for function.

The protein localises to the cytoplasm. The protein resides in the nucleus. Its subcellular location is the cytoskeleton. It localises to the spindle. It is found in the chromosome. The protein localises to the microtubule organizing center. The protein resides in the centrosome. Its function is as follows. Ubiquitin-like protein which can be covalently attached to target lysines as a monomer. Does not seem to be involved in protein degradation and may function as an antagonist of ubiquitin in the degradation process. Plays a role in a number of cellular processes such as nuclear transport, DNA replication and repair, mitosis and signal transduction. Covalent attachment to its substrates requires prior activation by the E1 complex aos-1-uba-2 and linkage to the E2 enzyme ubc-9, and can be promoted by an E3 ligase such as gei-17. Required for embryonic development, fertility, vulval morphogenesis and inhibition of vulval cell fates. Probably by sumoylating bet-1, prevents muscle myosin depletion in aging adults probably by preventing myoblast growth factor receptor egl-15 overexpression. Plays a role in the attenuation of the let-60/ras pathway. Plays a role in male tail tip morphogenesis. Plays a role in the mitochondrial stress response with its covalent attachment to transcription factors dve-1 and afts-1 negatively regulating the mitochondrial unfolded protein response. This is Small ubiquitin-related modifier from Caenorhabditis elegans.